Consider the following 678-residue polypeptide: Glycine--tRNA ligase beta subunit (678 aa).

This sequence belongs to the class-II aminoacyl-tRNA synthetase family. In terms of assembly, tetramer of two alpha and two beta subunits.

Its subcellular location is the cytoplasm. It carries out the reaction tRNA(Gly) + glycine + ATP = glycyl-tRNA(Gly) + AMP + diphosphate. The sequence is that of Glycine--tRNA ligase beta subunit from Streptococcus pneumoniae (strain ATCC BAA-255 / R6).